The sequence spans 904 residues: MLGIGTISRKIFGSPNDRKVKATRPVIAQINALEPEFEKLSDEGLKEKTEEFRKRALEGESLDALLPEAFANCREAARRALGLRAFDTQLMGAVFLHQGNIAEQKTGEGKTLTATFAAYLNGLTGRGVHIVTVNEYLAKRDAAWMGSVFGALGLTTGVAYSDMPEDEKRKAYASDITYATNNELGFDYLRDNMKSELDQIYQKQHNFAIVDEVDSILIDEARTPLIISGPSQDRSEMYKTVDAVIPQVRDDHFELDEKTRNVTFTDEGNEFLEEILHAQGLLEEGQSLYDPESTTVVHHVNQGLRAHKLFQRDKDYIVRDDNVVLIDEFTGRMMPGRRLSDGLHQAIEAKEGVDIKPENITLASVTFQNYFRLYDKLSGMTGTALTEAEEFMEIYGLGVVEVPTNKPIARVDEDDQVYRTAREKYEAMLEKIKESNAKGQPVLVGTTSIEKSEMLSNMLKQAGITHNVLNARQHEQEAQIVADAGKYGAVTIATNMAGRGTDIQLGGNVDLQVMNALTADPDADPEALRASIEAQHADEKAKVLAAGGLYVLASERHESRRIDNQLRGRSGRQGDPGRSSFFLSLEDDLMRIFGSERLEKVLKTLGLKEGEAIVHPWVNKSLERAQSKVEGRNFDIRKQLLKFDDVMNEQRKVIFGQRREIMEAKDLSEITTDMRHQVIDDFIEQYLPPNTYADQWDAEGLYAAVQEQLGIDVPVMDWVEEEGVDDEAIRERLVEATDKLMTEKAGQFGAENMRNIEKQLLLQAIDTKWREHLLTLEHLRSVVGFRGYAQRDPLNEYKNESFQLFESMLDSLREDVTQKLSQIRPMTEEEQQAMIEQIRAQQAAAQAAAAGPTVSAQAGPVAGPADAAVAFDENDPSTWGNPGRNEPCPCQSGKKFKHCHGRLI.

ATP-binding positions include glutamine 89, 107–111, and aspartate 502; that span reads GEGKT. The Zn(2+) site is built by cysteine 888, cysteine 890, cysteine 899, and histidine 900.

Belongs to the SecA family. In terms of assembly, monomer and homodimer. Part of the essential Sec protein translocation apparatus which comprises SecA, SecYEG and auxiliary proteins SecDF-YajC and YidC. Requires Zn(2+) as cofactor.

It localises to the cell inner membrane. It is found in the cytoplasm. It catalyses the reaction ATP + H2O + cellular proteinSide 1 = ADP + phosphate + cellular proteinSide 2.. In terms of biological role, part of the Sec protein translocase complex. Interacts with the SecYEG preprotein conducting channel. Has a central role in coupling the hydrolysis of ATP to the transfer of proteins into and across the cell membrane, serving both as a receptor for the preprotein-SecB complex and as an ATP-driven molecular motor driving the stepwise translocation of polypeptide chains across the membrane. This chain is Protein translocase subunit SecA, found in Roseobacter denitrificans (strain ATCC 33942 / OCh 114) (Erythrobacter sp. (strain OCh 114)).